A 106-amino-acid polypeptide reads, in one-letter code: Putative membrane protein insertion efficiency factor (106 aa).

It belongs to the UPF0161 family.

It is found in the cell inner membrane. Functionally, could be involved in insertion of integral membrane proteins into the membrane. The protein is Putative membrane protein insertion efficiency factor of Methylacidiphilum infernorum (isolate V4) (Methylokorus infernorum (strain V4)).